We begin with the raw amino-acid sequence, 106 residues long: Large ribosomal subunit protein P2 (106 aa).

Residues 79–106 (GAGAVAEAKKEEPEEEEADDDMGFGLFD) are disordered. Acidic residues predominate over residues 91-100 (PEEEEADDDM).

The protein belongs to the eukaryotic ribosomal protein P1/P2 family. In terms of assembly, P1 and P2 exist as dimers at the large ribosomal subunit. Post-translationally, phosphorylated.

Plays an important role in the elongation step of protein synthesis. This Leishmania infantum protein is Large ribosomal subunit protein P2 (LIP).